The sequence spans 147 residues: Protein-export protein SecB (147 aa).

This sequence belongs to the SecB family. Homotetramer, a dimer of dimers. One homotetramer interacts with 1 SecA dimer.

Its subcellular location is the cytoplasm. One of the proteins required for the normal export of preproteins out of the cell cytoplasm. It is a molecular chaperone that binds to a subset of precursor proteins, maintaining them in a translocation-competent state. It also specifically binds to its receptor SecA. The chain is Protein-export protein SecB from Neisseria gonorrhoeae (strain ATCC 700825 / FA 1090).